The sequence spans 128 residues: Protein ripply2 (128 aa).

The segment at 1-63 (MENAGGAEGT…HAAEAMPDGP (63 aa)) is disordered. Positions 9–22 (GTESGAAACAATDG) are enriched in low complexity. The WRPW motif motif lies at 37–40 (WRPW). Residues 77-112 (HPVRLFWPKSKCYDYLYQEAEALLKNFPIQATISFY) form a ripply homology domain region.

The protein belongs to the ripply family.

It localises to the nucleus. In terms of biological role, plays a role in somitogenesis. Required for somite segregation and establishment of rostrocaudal polarity in somites. This is Protein ripply2 (RIPPLY2) from Homo sapiens (Human).